We begin with the raw amino-acid sequence, 133 residues long: U6 snRNA-associated Sm-like protein LSm1 (133 aa).

The Sm domain occupies 5 to 80 (PGTASLIEDI…VVLLGEIDLE (76 aa)). S123 carries the phosphoserine modification. T129 is subject to Phosphothreonine.

It belongs to the snRNP Sm proteins family. Interacts with SLBP; interaction with SLBP occurs when histone mRNA is being rapidly degraded during the S phase. LSm subunits form a heteromer with a donut shape.

It is found in the cytoplasm. The protein localises to the P-body. Functionally, plays a role in the degradation of histone mRNAs, the only eukaryotic mRNAs that are not polyadenylated. Probably also part of an LSm subunits-containing complex involved in the general process of mRNA degradation. This chain is U6 snRNA-associated Sm-like protein LSm1 (LSM1), found in Homo sapiens (Human).